The chain runs to 151 residues: Ribonuclease H (151 aa).

Residues 1–143 (MSDVVVIHTD…ADVLATRGLQ (143 aa)) enclose the RNase H type-1 domain. Positions 10, 49, 71, and 135 each coordinate Mg(2+).

It belongs to the RNase H family. Monomer. Mg(2+) is required as a cofactor.

The protein resides in the cytoplasm. The catalysed reaction is Endonucleolytic cleavage to 5'-phosphomonoester.. In terms of biological role, endonuclease that specifically degrades the RNA of RNA-DNA hybrids. The polypeptide is Ribonuclease H (Mycolicibacterium gilvum (strain PYR-GCK) (Mycobacterium gilvum (strain PYR-GCK))).